We begin with the raw amino-acid sequence, 356 residues long: Methionine import ATP-binding protein MetN 1 (356 aa).

Residues 15 to 254 (IQIRALNKTY…PVQPITQELL (240 aa)) enclose the ABC transporter domain. 51-58 (GKSGAGKS) provides a ligand contact to ATP.

The protein belongs to the ABC transporter superfamily. Methionine importer (TC 3.A.1.24) family. As to quaternary structure, the complex is composed of two ATP-binding proteins (MetN), two transmembrane proteins (MetI) and a solute-binding protein (MetQ).

It localises to the cell inner membrane. The enzyme catalyses L-methionine(out) + ATP + H2O = L-methionine(in) + ADP + phosphate + H(+). It carries out the reaction D-methionine(out) + ATP + H2O = D-methionine(in) + ADP + phosphate + H(+). In terms of biological role, part of the ABC transporter complex MetNIQ involved in methionine import. Responsible for energy coupling to the transport system. This Acinetobacter baylyi (strain ATCC 33305 / BD413 / ADP1) protein is Methionine import ATP-binding protein MetN 1.